Reading from the N-terminus, the 413-residue chain is ORC1-type DNA replication protein 2 (413 aa).

ATP is bound by residues 70–74 (TGKTA), Tyr217, and Arg229.

This sequence belongs to the CDC6/cdc18 family. As to quaternary structure, monomer. Interacts with Cdc6-3, MCM and PolB1. Post-translationally, autophosphorylated in vitro.

Involved in regulation of DNA replication. May play essential roles in origin recognition and cell cycle control of replication. Binds both single-stranded and double-stranded DNA, with a preference for molecules that contain a bubble, a fork, or a tail. Has a weak ATPase activity. Stimulates the binding of the MCM helicase to the origin DNA, but strongly inhibits ATPase and DNA helicase activities of MCM. Also regulates the DNA polymerase and the nuclease activities of PolB1. This chain is ORC1-type DNA replication protein 2 (cdc6-2), found in Saccharolobus solfataricus (strain ATCC 35092 / DSM 1617 / JCM 11322 / P2) (Sulfolobus solfataricus).